The chain runs to 85 residues: UPF0297 protein Clos_1665 (85 aa).

The protein belongs to the UPF0297 family.

This Alkaliphilus oremlandii (strain OhILAs) (Clostridium oremlandii (strain OhILAs)) protein is UPF0297 protein Clos_1665.